Here is a 376-residue protein sequence, read N- to C-terminus: MSERFSFDLHASDGKARTGVIHTPRGGVRTPAFMPVGTAATVKAMMPESVRATGADILLGNTYHLMLRPTAERIDRLGGLHRFMNWDRPILTDSGGFQVMSLAGLRKLTEKGVTFKSHIDGSKHELTPERSMEIQRLLGSDIVMCFDECPALPADRDRIAESMRLSMRWAERSREAFGDRPGHALFGIMQGGLEQDLREESAQALRSVGFDGYAVGGLAVGEGQAAMFDCLDYAPGFLPEDKPRYLMGVGKPDDIVGAVKRGIDMMDCVLPSRSGRTGQVFTRHGVLNIKNARHMDDPRPLDEACTCPACRNYSRAYLHHVFRSQEIISSMLLTWHNLHYFQEIMQGMREAIAGGTFEAWEAAFHAGRAQGDIEPL.

The active-site Proton acceptor is Asp-93. Residues 93–97 (DSGGF), Asp-147, Gln-190, and Gly-217 each bind substrate. The RNA binding stretch occupies residues 248–254 (GVGKPDD). The active-site Nucleophile is the Asp-267. Residues Cys-305, Cys-307, Cys-310, and His-336 each coordinate Zn(2+).

Belongs to the queuine tRNA-ribosyltransferase family. As to quaternary structure, homodimer. Within each dimer, one monomer is responsible for RNA recognition and catalysis, while the other monomer binds to the replacement base PreQ1. It depends on Zn(2+) as a cofactor.

It catalyses the reaction 7-aminomethyl-7-carbaguanine + guanosine(34) in tRNA = 7-aminomethyl-7-carbaguanosine(34) in tRNA + guanine. The protein operates within tRNA modification; tRNA-queuosine biosynthesis. In terms of biological role, catalyzes the base-exchange of a guanine (G) residue with the queuine precursor 7-aminomethyl-7-deazaguanine (PreQ1) at position 34 (anticodon wobble position) in tRNAs with GU(N) anticodons (tRNA-Asp, -Asn, -His and -Tyr). Catalysis occurs through a double-displacement mechanism. The nucleophile active site attacks the C1' of nucleotide 34 to detach the guanine base from the RNA, forming a covalent enzyme-RNA intermediate. The proton acceptor active site deprotonates the incoming PreQ1, allowing a nucleophilic attack on the C1' of the ribose to form the product. After dissociation, two additional enzymatic reactions on the tRNA convert PreQ1 to queuine (Q), resulting in the hypermodified nucleoside queuosine (7-(((4,5-cis-dihydroxy-2-cyclopenten-1-yl)amino)methyl)-7-deazaguanosine). The sequence is that of Queuine tRNA-ribosyltransferase from Ruegeria pomeroyi (strain ATCC 700808 / DSM 15171 / DSS-3) (Silicibacter pomeroyi).